We begin with the raw amino-acid sequence, 139 residues long: Acyl carrier protein 4, chloroplastic (139 aa).

The N-terminal 55 residues, 1–55, are a transit peptide targeting the chloroplast; that stretch reads MASAAAGASICIKSASCSPLAPGRISSLRSVSLPVSRKSFPSLRSSKGSFARVSC. Residues 59–134 enclose the Carrier domain; sequence PETVAKVCRI…DAADLIEKLM (76 aa). An O-(pantetheine 4'-phosphoryl)serine modification is found at S94.

It belongs to the acyl carrier protein (ACP) family. In terms of processing, 4'-phosphopantetheine is transferred from CoA to a specific serine of apo-ACP by acpS. This modification is essential for activity because fatty acids are bound in thioester linkage to the sulfhydryl of the prosthetic group.

It localises to the plastid. The protein localises to the chloroplast. It participates in lipid metabolism; fatty acid biosynthesis. Its function is as follows. Carrier of the growing fatty acid chain in fatty acid biosynthesis. This chain is Acyl carrier protein 4, chloroplastic (ACL1), found in Cuphea lanceolata (Cigar flower).